Reading from the N-terminus, the 206-residue chain is Platelet glycoprotein Ib beta chain (206 aa).

The N-terminal stretch at 1–26 (MGSRPRGALSLLLLLLAPPSRPASGC) is a signal peptide. 2 disulfide bridges follow: Cys26-Cys32 and Cys30-Cys39. The 29-residue stretch at 27–55 (PAPCRCSETRVDCGRRGLTWASLPAAFPP) folds into the LRRNT domain. The Extracellular segment spans residues 27-150 (PAPCRCSETR…CAPGLLCWGA (124 aa)). The stretch at 60 to 83 (LVLTDNNLTALPPGLLDTLPALRR) is one LRR repeat. The LRRCT domain maps to 89 to 143 (NPWRCDCRLLPLRAWLAGRPEREFYRDLRCVAPLALRGRLLPYVAEDELRAACAP). 2 cysteine pairs are disulfide-bonded: Cys93–Cys118 and Cys95–Cys141. Residues 151 to 171 (LVAQLALLVLGLLHALLLALL) form a helical membrane-spanning segment. Residues 172–206 (LSRLRRLRAQARARSTREFSLTAPLVAESAGGGAS) are Cytoplasmic-facing. Ser186 is modified (phosphoserine). Position 191 is a phosphoserine; by PKA (Ser191). Thr193 carries the post-translational modification Phosphothreonine. Ser200 carries the phosphoserine modification.

Two GP-Ib beta are disulfide-linked to one GP-Ib alpha. GP-IX is complexed with the GP-Ib heterodimer via a non covalent linkage. Interacts with TRAF4.

Its subcellular location is the membrane. In terms of biological role, gp-Ib, a surface membrane protein of platelets, participates in the formation of platelet plugs by binding to von Willebrand factor, which is already bound to the subendothelium. In Rattus norvegicus (Rat), this protein is Platelet glycoprotein Ib beta chain (Gp1bb).